The following is a 299-amino-acid chain: Putative cuticle collagen 155 (299 aa).

The signal sequence occupies residues 1–27 (MEFEQRIKAYRFVAYSAVAFSVVAVLS). 4 triple-helical region regions span residues 103 to 132 (GAAGPAGTPGKPGRPGKPGAPGLPGNPGHP), 151 to 177 (GPPGPPGPPGPSGDAGGNGNPGSPGQD), 181 to 202 (GAPGNKGPSGPNGNPGAPGAPG), and 216 to 278 (GAPG…VGEK). The tract at residues 107–278 (PAGTPGKPGR…SGTPGGVGEK (172 aa)) is disordered. Positions 129–161 (PGHPPQQPCDPITPPPCQPCPQGPPGPPGPPGP) are enriched in pro residues. A compositionally biased stretch (gly residues) spans 163–172 (GDAGGNGNPG). A compositionally biased stretch (low complexity) spans 173–197 (SPGQDGQPGAPGNKGPSGPNGNPGA). Pro residues predominate over residues 215 to 233 (PGAPGPQGTPGPQGPPGQP). Over residues 250 to 268 (PNGNPGQPGADGNPGAPGQ) the composition is skewed to low complexity.

It belongs to the cuticular collagen family. In terms of assembly, collagen polypeptide chains are complexed within the cuticle by disulfide bonds and other types of covalent cross-links.

Its function is as follows. Nematode cuticles are composed largely of collagen-like proteins. The cuticle functions both as an exoskeleton and as a barrier to protect the worm from its environment. This Caenorhabditis elegans protein is Putative cuticle collagen 155 (col-155).